Consider the following 428-residue polypeptide: MTNRTSYFYDPDVGNFHYGAGHPMKPHRLSLTHSLVLHYGLYKKMMVFKPYKASQHDMCRFHSEDYIDFLQKVSPNNMQGFTKSLNTFNVGDDCPVFPGLFEFCSRYTGASLQGATQLNHKICDIAINWAGGLHHAKKFEASGFCYVNDIVISILELLKYHPRVLYIDIDIHHGDGVQEAFYLTDRVMTVSFHKYGNYFFPGTGDMYEVGAESGRYYCLNVPLRDGIDDQSYRQLFQPVIKQVVDFYQPTCIVLQCGADSLGCDRLGCFNLSIRGHGECVEFVKSFKIPLLVLGGGGYTVRNVARCWTFETSLLLEESISDELPYSEYFEYFAPDFTLHPDVSTRIENQNSRQYLEQIRQTVFENLKMLNHAPSVQIHDVPSDMLNYERNDEPDPDERGAEENYTRPEAANEFYDGDHDNDKESDVEI.

A histone deacetylase region spans residues 3–316 (NRTSYFYDPD…WTFETSLLLE (314 aa)). Residues His-17, Gly-21, and Lys-25 each contribute to the 1D-myo-inositol 1,4,5,6-tetrakisphosphate site. The active site involves His-135. Zn(2+) contacts are provided by Asp-170, His-172, and Asp-259. Arg-265 is a binding site for 1D-myo-inositol 1,4,5,6-tetrakisphosphate. The disordered stretch occupies residues 385–428 (LNYERNDEPDPDERGAEENYTRPEAANEFYDGDHDNDKESDVEI). Composition is skewed to basic and acidic residues over residues 386–405 (NYERNDEPDPDERGAEENYT) and 415–428 (DGDHDNDKESDVEI).

This sequence belongs to the histone deacetylase family. HD type 1 subfamily.

It is found in the nucleus. Its subcellular location is the chromosome. The protein resides in the cytoplasm. The protein localises to the cytosol. The catalysed reaction is N(6)-acetyl-L-lysyl-[histone] + H2O = L-lysyl-[histone] + acetate. Inositol tetraphosphate (1D-myo-inositol 1,4,5,6-tetrakisphosphate) promotes the histone deacetylase activity by acting as an intermolecular glue between hdac3 and N-Cor repressor complex components. Responsible for the deacetylation of lysine residues on the N-terminal part of the core histones (H2A, H2B, H3 and H4). Histone deacetylation gives a tag for epigenetic repression and plays an important role in transcriptional regulation, cell cycle progression and developmental events. Histone deacetylases act via the formation of large multiprotein complexes, such as N-Cor repressor complex, which activate the histone deacetylase activity. May play a role in the regulation of the circadian clock in a deacetylase activity-independent manner. The chain is Histone deacetylase 3 (hdac3) from Tetraodon nigroviridis (Spotted green pufferfish).